We begin with the raw amino-acid sequence, 142 residues long: Ribosome-binding factor A (142 aa).

A compositionally biased stretch (basic and acidic residues) spans 120–130 (EVRRDIDHAPA). The tract at residues 120–142 (EVRRDIDHAPAEDEFPTDGDDGQ) is disordered. The segment covering 131–142 (EDEFPTDGDDGQ) has biased composition (acidic residues).

Belongs to the RbfA family. As to quaternary structure, monomer. Binds 30S ribosomal subunits, but not 50S ribosomal subunits or 70S ribosomes.

The protein resides in the cytoplasm. One of several proteins that assist in the late maturation steps of the functional core of the 30S ribosomal subunit. Associates with free 30S ribosomal subunits (but not with 30S subunits that are part of 70S ribosomes or polysomes). Required for efficient processing of 16S rRNA. May interact with the 5'-terminal helix region of 16S rRNA. The sequence is that of Ribosome-binding factor A from Paramagnetospirillum magneticum (strain ATCC 700264 / AMB-1) (Magnetospirillum magneticum).